Here is a 152-residue protein sequence, read N- to C-terminus: SsrA-binding protein (152 aa).

It belongs to the SmpB family.

Its subcellular location is the cytoplasm. In terms of biological role, required for rescue of stalled ribosomes mediated by trans-translation. Binds to transfer-messenger RNA (tmRNA), required for stable association of tmRNA with ribosomes. tmRNA and SmpB together mimic tRNA shape, replacing the anticodon stem-loop with SmpB. tmRNA is encoded by the ssrA gene; the 2 termini fold to resemble tRNA(Ala) and it encodes a 'tag peptide', a short internal open reading frame. During trans-translation Ala-aminoacylated tmRNA acts like a tRNA, entering the A-site of stalled ribosomes, displacing the stalled mRNA. The ribosome then switches to translate the ORF on the tmRNA; the nascent peptide is terminated with the 'tag peptide' encoded by the tmRNA and targeted for degradation. The ribosome is freed to recommence translation, which seems to be the essential function of trans-translation. This is SsrA-binding protein from Lactobacillus helveticus (strain DPC 4571).